We begin with the raw amino-acid sequence, 156 residues long: MTNDIYFMTLAIEEAKKAAQLGEVPIGAIITKDDEVIARAHNLRETLQQPTAHAEHIAIERAAKVLGSWRLEGCTLYVTLEPCVMCAGTIVMSRIPRVVYGADDPKGGCSGSLMNLLQQSNFNHRAIVDKGVLKEACSTLLTTFFKNLRANKKSTN.

The 119-residue stretch at 2–120 (TNDIYFMTLA…GSLMNLLQQS (119 aa)) folds into the CMP/dCMP-type deaminase domain. A Zn(2+)-binding site is contributed by His53. Glu55 acts as the Proton donor in catalysis. Zn(2+)-binding residues include Cys83 and Cys86.

It belongs to the cytidine and deoxycytidylate deaminase family. Homodimer. It depends on Zn(2+) as a cofactor.

The enzyme catalyses adenosine(34) in tRNA + H2O + H(+) = inosine(34) in tRNA + NH4(+). In terms of biological role, catalyzes the deamination of adenosine to inosine at the wobble position 34 of tRNA(Arg2). The polypeptide is tRNA-specific adenosine deaminase (Staphylococcus aureus (strain Mu50 / ATCC 700699)).